Reading from the N-terminus, the 460-residue chain is A-type ATP synthase subunit B (460 aa).

Belongs to the ATPase alpha/beta chains family. As to quaternary structure, has multiple subunits with at least A(3), B(3), C, D, E, F, H, I and proteolipid K(x).

The protein resides in the cell membrane. Component of the A-type ATP synthase that produces ATP from ADP in the presence of a proton gradient across the membrane. The B chain is a regulatory subunit. The sequence is that of A-type ATP synthase subunit B from Thermoplasma volcanium (strain ATCC 51530 / DSM 4299 / JCM 9571 / NBRC 15438 / GSS1).